The following is a 527-amino-acid chain: MFTARVARPMAGDDAPAASSGSTGSSAPPASSAADCVLEVRGVGKSFPGVVALDGVQFRVRRGTVHALMGENGAGKSTLMKIIAGVYTPDQGEILINGEPVVLNGPLDALDRGIAMIHQELNLMPYMTVAENIWIRREPKNRFGLIDHAALRRQTAELFERLSIDIDPETDVRTLTVASRQMVEIAKAVSFDSDVLIMDEPTSALTDKEVTHLFRIIRQLREQGKGIVYITHKMNELFEIADEFSVFRDGKYIGTHASSDVTRDDIIRMMVGREITQMFPKEEVPIGDVVLSVKNLGVDGVFRDVSFELRAGEILGVAGLVGSGRSNVAEALFGVVPATSGEIRIDGKPVRITTPGQAMKHGMAFLTEDRKDTGCFLNLDLLANMEAAVLSNRYVKFNFVRQAQLKRDCEEMSRMLRVKSPGLHEEIQNLSGGNQQKVLIGRWLLTQPRILILDEPTRGIDVGAKAEIHRLVSALAGKGVAVLMISSEMPEVLGMSDRVMVMHEGRMTGIVDRKDADQVRIMDLASR.

The segment at 1–31 (MFTARVARPMAGDDAPAASSGSTGSSAPPAS) is disordered. Positions 12-31 (GDDAPAASSGSTGSSAPPAS) are enriched in low complexity. 2 ABC transporter domains span residues 38 to 274 (LEVR…VGRE) and 284 to 523 (VPIG…RIMD). 70-77 (GENGAGKS) is a binding site for ATP.

This sequence belongs to the ABC transporter superfamily. Carbohydrate importer 2 (CUT2) (TC 3.A.1.2) family.

The protein localises to the cell inner membrane. The catalysed reaction is D-ribose(out) + ATP + H2O = D-ribose(in) + ADP + phosphate + H(+). It catalyses the reaction D-galactose(out) + ATP + H2O = D-galactose(in) + ADP + phosphate + H(+). Part of an ABC transporter complex involved in carbohydrate import. Could be involved in ribose, galactose and/or methyl galactoside import. Responsible for energy coupling to the transport system. This Burkholderia lata (strain ATCC 17760 / DSM 23089 / LMG 22485 / NCIMB 9086 / R18194 / 383) protein is Putative ribose/galactose/methyl galactoside import ATP-binding protein 2.